Here is an 856-residue protein sequence, read N- to C-terminus: Valine--tRNA ligase (856 aa).

Positions 47–57 match the 'HIGH' region motif; sequence PTASGVLHIGH. The 'KMSKS' region motif lies at 578–582; sequence KMSKS. Lys581 lines the ATP pocket.

Belongs to the class-I aminoacyl-tRNA synthetase family. ValS type 2 subfamily. Monomer.

The protein localises to the cytoplasm. It carries out the reaction tRNA(Val) + L-valine + ATP = L-valyl-tRNA(Val) + AMP + diphosphate. Its function is as follows. Catalyzes the attachment of valine to tRNA(Val). As ValRS can inadvertently accommodate and process structurally similar amino acids such as threonine, to avoid such errors, it has a 'posttransfer' editing activity that hydrolyzes mischarged Thr-tRNA(Val) in a tRNA-dependent manner. This is Valine--tRNA ligase from Tropheryma whipplei (strain Twist) (Whipple's bacillus).